A 523-amino-acid polypeptide reads, in one-letter code: 2-isopropylmalate synthase (523 aa).

The Pyruvate carboxyltransferase domain occupies 5 to 267 (VIIFDTTLRD…HTNINHHEIW (263 aa)). The Mn(2+) site is built by aspartate 14, histidine 202, histidine 204, and asparagine 238. The regulatory domain stretch occupies residues 392 to 523 (RLDYFSVQSG…QNKENNKETV (132 aa)).

It belongs to the alpha-IPM synthase/homocitrate synthase family. LeuA type 1 subfamily. In terms of assembly, homodimer. The cofactor is Mn(2+).

The protein localises to the cytoplasm. It carries out the reaction 3-methyl-2-oxobutanoate + acetyl-CoA + H2O = (2S)-2-isopropylmalate + CoA + H(+). It participates in amino-acid biosynthesis; L-leucine biosynthesis; L-leucine from 3-methyl-2-oxobutanoate: step 1/4. Catalyzes the condensation of the acetyl group of acetyl-CoA with 3-methyl-2-oxobutanoate (2-ketoisovalerate) to form 3-carboxy-3-hydroxy-4-methylpentanoate (2-isopropylmalate). This is 2-isopropylmalate synthase from Salmonella newport (strain SL254).